Consider the following 424-residue polypeptide: Tyrosine--tRNA ligase (424 aa).

L-tyrosine is bound at residue Tyr-37. Residues 42–51 (PTADSLHLGH) carry the 'HIGH' region motif. An N6-acetyllysine modification is found at Lys-144. Tyr-175 and Gln-179 together coordinate L-tyrosine. Positions 235–239 (KFGKT) match the 'KMSKS' region motif. ATP is bound at residue Lys-238. The 58-residue stretch at 357–414 (ADLMQALVDSELQPSRGQARKTIASNAITINGEKQSDPEYFFKEEDRLFGRFTLLRRG) folds into the S4 RNA-binding domain.

It belongs to the class-I aminoacyl-tRNA synthetase family. TyrS type 1 subfamily. As to quaternary structure, homodimer.

It is found in the cytoplasm. The catalysed reaction is tRNA(Tyr) + L-tyrosine + ATP = L-tyrosyl-tRNA(Tyr) + AMP + diphosphate + H(+). In terms of biological role, catalyzes the attachment of tyrosine to tRNA(Tyr) in a two-step reaction: tyrosine is first activated by ATP to form Tyr-AMP and then transferred to the acceptor end of tRNA(Tyr). The sequence is that of Tyrosine--tRNA ligase from Escherichia coli O8 (strain IAI1).